Here is a 316-residue protein sequence, read N- to C-terminus: Transaldolase (316 aa).

The active-site Schiff-base intermediate with substrate is the Lys125.

It belongs to the transaldolase family. Type 1 subfamily. In terms of assembly, homodimer.

The protein resides in the cytoplasm. The catalysed reaction is D-sedoheptulose 7-phosphate + D-glyceraldehyde 3-phosphate = D-erythrose 4-phosphate + beta-D-fructose 6-phosphate. Its pathway is carbohydrate degradation; pentose phosphate pathway; D-glyceraldehyde 3-phosphate and beta-D-fructose 6-phosphate from D-ribose 5-phosphate and D-xylulose 5-phosphate (non-oxidative stage): step 2/3. In terms of biological role, transaldolase is important for the balance of metabolites in the pentose-phosphate pathway. In Verminephrobacter eiseniae (strain EF01-2), this protein is Transaldolase.